Reading from the N-terminus, the 412-residue chain is Phosphoglycerate kinase (412 aa).

Residues 26 to 28 (DFN), Arg42, 65 to 68 (HLGR), Arg133, and Arg166 contribute to the substrate site. Residues Lys217, Gly308, Glu339, and 368 to 371 (GGDS) contribute to the ATP site.

It belongs to the phosphoglycerate kinase family. As to quaternary structure, monomer.

It is found in the cytoplasm. It catalyses the reaction (2R)-3-phosphoglycerate + ATP = (2R)-3-phospho-glyceroyl phosphate + ADP. It functions in the pathway carbohydrate degradation; glycolysis; pyruvate from D-glyceraldehyde 3-phosphate: step 2/5. In Synechococcus sp. (strain JA-3-3Ab) (Cyanobacteria bacterium Yellowstone A-Prime), this protein is Phosphoglycerate kinase.